Consider the following 418-residue polypeptide: Tektin-1 (418 aa).

Coiled coils occupy residues 21–107, 134–177, 266–308, and 333–384; these read KNQY…TLKE, HELI…DLKD, NGLK…DQEG, and AQYR…NTIY.

The protein belongs to the tektin family. As to quaternary structure, microtubule inner protein component of sperm flagellar doublet microtubules. Ubiquitinated, leading to its degradation. Deubiquitinated by USP16, promoting its stability. Predominantly expressed in testis. Expressed in airway epithelial cells.

The protein resides in the cytoplasm. It localises to the cytoskeleton. Its subcellular location is the cilium axoneme. It is found in the flagellum axoneme. In terms of biological role, microtubule inner protein (MIP) part of the dynein-decorated doublet microtubules (DMTs) in cilia and flagellar axoneme. Forms filamentous polymers in the walls of ciliary and flagellar microtubules. The sequence is that of Tektin-1 (TEKT1) from Homo sapiens (Human).